The sequence spans 435 residues: ATP-dependent protease ATPase subunit HslU (435 aa).

ATP-binding positions include Ile-18, 60–65 (GVGKTE), Asp-248, Glu-313, and Arg-385.

Belongs to the ClpX chaperone family. HslU subfamily. A double ring-shaped homohexamer of HslV is capped on each side by a ring-shaped HslU homohexamer. The assembly of the HslU/HslV complex is dependent on binding of ATP.

Its subcellular location is the cytoplasm. Its function is as follows. ATPase subunit of a proteasome-like degradation complex; this subunit has chaperone activity. The binding of ATP and its subsequent hydrolysis by HslU are essential for unfolding of protein substrates subsequently hydrolyzed by HslV. HslU recognizes the N-terminal part of its protein substrates and unfolds these before they are guided to HslV for hydrolysis. This is ATP-dependent protease ATPase subunit HslU from Ruegeria pomeroyi (strain ATCC 700808 / DSM 15171 / DSS-3) (Silicibacter pomeroyi).